A 202-amino-acid chain; its full sequence is Large ribosomal subunit protein bL17 (202 aa).

The tract at residues 148–202 (DEAPAAESTDAAQVEAGGVEQPDTLPDADAPATADEGVEVDAAEVDPSDEKKDQA) is disordered. Positions 169–182 (PDTLPDADAPATAD) are enriched in low complexity. Acidic residues predominate over residues 183–194 (EGVEVDAAEVDP).

Belongs to the bacterial ribosomal protein bL17 family. As to quaternary structure, part of the 50S ribosomal subunit. Contacts protein L32.

This chain is Large ribosomal subunit protein bL17, found in Kineococcus radiotolerans (strain ATCC BAA-149 / DSM 14245 / SRS30216).